The sequence spans 294 residues: Small ribosomal subunit protein uS3 (294 aa).

In terms of domain architecture, KH type-2 spans 39–107 (VREYLKTKLK…PVAVNIEEVR (69 aa)). Residues 210-294 (RNDLPAVETP…AAPAADVKGE (85 aa)) are disordered. Over residues 219–238 (PRPDEERRPRGPRRDGRPGG) the composition is skewed to basic and acidic residues. Composition is skewed to low complexity over residues 249 to 258 (RPAAGNSAPA) and 281 to 294 (VAAP…VKGE).

This sequence belongs to the universal ribosomal protein uS3 family. In terms of assembly, part of the 30S ribosomal subunit. Forms a tight complex with proteins S10 and S14.

Functionally, binds the lower part of the 30S subunit head. Binds mRNA in the 70S ribosome, positioning it for translation. This Verminephrobacter eiseniae (strain EF01-2) protein is Small ribosomal subunit protein uS3.